The sequence spans 26 residues: Thrombopoietin (26 aa).

It belongs to the EPO/TPO family.

The protein resides in the secreted. Lineage-specific cytokine affecting the proliferation and maturation of megakaryocytes from their committed progenitor cells. It acts at a late stage of megakaryocyte development. It may be the major physiological regulator of circulating platelets. This chain is Thrombopoietin (THPO), found in Sus scrofa (Pig).